Reading from the N-terminus, the 357-residue chain is Arginine kinase (357 aa).

The 83-residue stretch at 9–91 (KLEAGFKKLQ…FNPIIEDYHE (83 aa)) folds into the Phosphagen kinase N-terminal domain. Residue 64–66 (GVG) coordinates L-arginine. The 238-residue stretch at 119-356 (YVVSTHVRCG…LEMIKMEEAA (238 aa)) folds into the Phosphagen kinase C-terminal domain. Residues 122–126 (STHVR) and H185 contribute to the ATP site. E225 serves as a coordination point for L-arginine. ATP is bound at residue R229. L-arginine is bound at residue C271. ATP-binding positions include 280 to 284 (RASVH) and 309 to 314 (RGTRGE).

This sequence belongs to the ATP:guanido phosphotransferase family.

The enzyme catalyses L-arginine + ATP = N(omega)-phospho-L-arginine + ADP + H(+). Catalyzes the reversible transfer of high energy ATP gamma-phosphate group to L-arginine. The protein is Arginine kinase of Polybetes pythagoricus (South American huntsman spider).